A 549-amino-acid chain; its full sequence is Manganese transporter SMF2 (549 aa).

The segment at 1-23 (MTSQEYEPIQWSDESQTNNDSVN) is disordered. Polar residues predominate over residues 12 to 22 (SDESQTNNDSV). A run of 8 helical transmembrane segments spans residues 91–109 (LLFSVLVSNFMAAFWQYLC), 130–147 (FGLNITLYILAEMAIIAT), 161–185 (ILFHIPLALGVILTVVDVLIVLLAY), 196–214 (IFEAFVSLLVVLTVVCFTV), 312–332 (LLISLFTVALFVNCAILIVSG), 350–372 (IYNLLCSTLSKGAGTVFVLALLF), 432–452 (ASQVVLSLLLPFVSAPLLYFT), and 521–541 (VLAIIVWLIISGLNFYMLLGF).

It belongs to the NRAMP family.

Its subcellular location is the vacuole lumen. The protein resides in the vesicle. It localises to the cell membrane. The catalysed reaction is Mn(2+)(in) = Mn(2+)(out). High-affinity manganese transporter involved in manganese uptake from the extracellular environment. The polypeptide is Manganese transporter SMF2 (SMF2) (Saccharomyces cerevisiae (strain ATCC 204508 / S288c) (Baker's yeast)).